The primary structure comprises 68 residues: MEC1-mediated checkpoint protein HUG1 (68 aa).

Its subcellular location is the cytoplasm. The protein localises to the nucleus. Functionally, involved in the MEC1-mediated checkpoint response to DNA damage and replication arrest. The polypeptide is MEC1-mediated checkpoint protein HUG1 (HUG1) (Saccharomyces cerevisiae (strain ATCC 204508 / S288c) (Baker's yeast)).